A 264-amino-acid polypeptide reads, in one-letter code: Thymidylate synthase (264 aa).

Residue Arg21 coordinates dUMP. Residue His51 coordinates (6R)-5,10-methylene-5,6,7,8-tetrahydrofolate. Position 126 to 127 (126 to 127 (RR)) interacts with dUMP. The active-site Nucleophile is Cys146. Residues 166–169 (RSCD), Asn177, and 207–209 (HLY) contribute to the dUMP site. Residue Asp169 participates in (6R)-5,10-methylene-5,6,7,8-tetrahydrofolate binding. Ala263 contacts (6R)-5,10-methylene-5,6,7,8-tetrahydrofolate.

Belongs to the thymidylate synthase family. Bacterial-type ThyA subfamily. As to quaternary structure, homodimer.

The protein localises to the cytoplasm. The catalysed reaction is dUMP + (6R)-5,10-methylene-5,6,7,8-tetrahydrofolate = 7,8-dihydrofolate + dTMP. It participates in pyrimidine metabolism; dTTP biosynthesis. Functionally, catalyzes the reductive methylation of 2'-deoxyuridine-5'-monophosphate (dUMP) to 2'-deoxythymidine-5'-monophosphate (dTMP) while utilizing 5,10-methylenetetrahydrofolate (mTHF) as the methyl donor and reductant in the reaction, yielding dihydrofolate (DHF) as a by-product. This enzymatic reaction provides an intracellular de novo source of dTMP, an essential precursor for DNA biosynthesis. The protein is Thymidylate synthase of Escherichia coli (strain 55989 / EAEC).